A 339-amino-acid polypeptide reads, in one-letter code: Glycerol-3-phosphate dehydrogenase [NAD(P)+] (339 aa).

Serine 15, tryptophan 16, histidine 36, and lysine 110 together coordinate NADPH. Residues lysine 110, glycine 144, and serine 146 each coordinate sn-glycerol 3-phosphate. Alanine 148 lines the NADPH pocket. Positions 199, 252, 262, 263, and 264 each coordinate sn-glycerol 3-phosphate. Catalysis depends on lysine 199, which acts as the Proton acceptor. Residue arginine 263 participates in NADPH binding. 2 residues coordinate NADPH: valine 287 and glutamate 289.

It belongs to the NAD-dependent glycerol-3-phosphate dehydrogenase family.

It localises to the cytoplasm. It catalyses the reaction sn-glycerol 3-phosphate + NAD(+) = dihydroxyacetone phosphate + NADH + H(+). It carries out the reaction sn-glycerol 3-phosphate + NADP(+) = dihydroxyacetone phosphate + NADPH + H(+). It functions in the pathway membrane lipid metabolism; glycerophospholipid metabolism. In terms of biological role, catalyzes the reduction of the glycolytic intermediate dihydroxyacetone phosphate (DHAP) to sn-glycerol 3-phosphate (G3P), the key precursor for phospholipid synthesis. The protein is Glycerol-3-phosphate dehydrogenase [NAD(P)+] of Desulfotalea psychrophila (strain LSv54 / DSM 12343).